A 71-amino-acid polypeptide reads, in one-letter code: Heat-stable enterotoxin B (71 aa).

An N-terminal signal peptide occupies residues Met-1–Gly-19. A propeptide spanning residues Gln-20–Ser-52 is cleaved from the precursor. Intrachain disulfides connect Cys-59–Cys-64, Cys-60–Cys-68, and Cys-63–Cys-71.

Belongs to the heat-stable enterotoxin family.

It is found in the secreted. Its function is as follows. Toxin which activates the particulate form of guanylate cyclase and increases cyclic GMP levels within the host intestinal epithelial cells. Could play an important role in pathogenesis. The protein is Heat-stable enterotoxin B (ystB) of Yersinia enterocolitica.